The following is a 1960-amino-acid chain: Exophilin-5 (1960 aa).

Residues 7-63 (GFDFSFLNEEEARKILQVLERNEELRRAEKDRISKLQKTKRDIRWLQGATGEWFEEI) enclose the RabBD domain. Polar residues-rich tracts occupy residues 325–334 (ASPATGSFTA), 342–366 (DTQN…LSSI), and 635–645 (SQSSSFPDSTA). Disordered regions lie at residues 325–366 (ASPA…LSSI), 616–645 (TPAS…DSTA), 672–720 (HSTD…TGLP), 734–835 (DFQN…SSNT), and 910–976 (FSRS…KGRV). Residues 673-682 (STDSLSLTDT) are compositionally biased toward low complexity. Residues 692–707 (NSEKDMDVSVSKDEQL) show a composition bias toward basic and acidic residues. Phosphoserine is present on residues serine 799 and serine 802. Composition is skewed to polar residues over residues 808–835 (ESGT…SSNT) and 910–920 (FSRSLSDQDPG). The span at 921–932 (QEQREEKDKATK) shows a compositional bias: basic and acidic residues. Residues 933–945 (SQDNQLAVNSTDN) are compositionally biased toward polar residues. Residue serine 1027 is modified to Phosphoserine. Positions 1035–1095 (QESKGTVASV…PKATKKMTDM (61 aa)) are disordered. Positions 1062 to 1074 (GKSTSDKPSSPES) are enriched in polar residues. Serine 1083 and serine 1117 each carry phosphoserine. 3 disordered regions span residues 1291–1375 (AQVQ…LSRE), 1389–1493 (PLLH…DSES), and 1510–1759 (EAQP…EPHL). The span at 1318–1336 (PESKDVSQLPDRETSKSTL) shows a compositional bias: basic and acidic residues. The span at 1356 to 1365 (KEISPSNVSK) shows a compositional bias: polar residues. A compositionally biased stretch (basic and acidic residues) spans 1392–1403 (HQEKGAGKEHTK). Polar residues-rich tracts occupy residues 1470 to 1493 (RETS…DSES) and 1520 to 1533 (SEAS…TNTA). Serine 1493 carries the phosphoserine modification. Basic and acidic residues-rich tracts occupy residues 1534-1546 (EMRK…HMLT) and 1561-1571 (TNTDETKDRYS). The segment covering 1572-1586 (GKHRLAAISKASKRI) has biased composition (basic residues). Positions 1637–1657 (ESSQMNVDKSETLLQETTVSS) are enriched in polar residues. Serine 1724, serine 1739, serine 1789, and serine 1819 each carry phosphoserine. Residues 1732–1741 (TQKSTINSHC) are compositionally biased toward polar residues. 2 disordered regions span residues 1828–1847 (ESES…STSS) and 1906–1960 (VNSP…ESEL). Acidic residues predominate over residues 1939–1950 (WDTDTTTDDEYY). Basic and acidic residues predominate over residues 1951 to 1960 (LDEKDKESEL).

As to quaternary structure, interacts with RAB27A.

Functionally, may act as Rab effector protein and play a role in vesicle trafficking. This chain is Exophilin-5, found in Mus musculus (Mouse).